A 311-amino-acid polypeptide reads, in one-letter code: tRNA(Ile)-lysidine synthase (311 aa).

32-37 (SGGPDS) is an ATP binding site.

Belongs to the tRNA(Ile)-lysidine synthase family.

It localises to the cytoplasm. The enzyme catalyses cytidine(34) in tRNA(Ile2) + L-lysine + ATP = lysidine(34) in tRNA(Ile2) + AMP + diphosphate + H(+). In terms of biological role, ligates lysine onto the cytidine present at position 34 of the AUA codon-specific tRNA(Ile) that contains the anticodon CAU, in an ATP-dependent manner. Cytidine is converted to lysidine, thus changing the amino acid specificity of the tRNA from methionine to isoleucine. In Cutibacterium acnes (strain DSM 16379 / KPA171202) (Propionibacterium acnes), this protein is tRNA(Ile)-lysidine synthase.